Consider the following 358-residue polypeptide: UPF0725 protein At4g29550 (358 aa).

Positions 31–82 (LNKHPPSGSGWTDEDDDNDDVFSSSFISKEELSDAVHNDPPSGWTDEDDDDQ) are disordered. Over residues 58 to 67 (SKEELSDAVH) the composition is skewed to basic and acidic residues.

The protein belongs to the UPF0725 (EMB2204) family.

The polypeptide is UPF0725 protein At4g29550 (Arabidopsis thaliana (Mouse-ear cress)).